The following is a 260-amino-acid chain: Salicylic acid-binding protein 2 (260 aa).

Residues Ala-13, Ser-81, and Lys-159 each coordinate salicylate. Ser-81 (acyl-ester intermediate) is an active-site residue. Residues Asp-210 and His-238 each act as charge relay system in the active site. His-238, Leu-253, and His-257 together coordinate salicylate.

The protein belongs to the AB hydrolase superfamily. Methylesterase family.

It carries out the reaction methyl salicylate + H2O = salicylate + methanol + H(+). It participates in plant hormone biosynthesis. With respect to regulation, esterase activity is down-regulated by salicylic acid (SA) or by tetraFA, a synthetic SA analog. Its function is as follows. Required to convert methyl salicylate (MeSA) to salicylic acid (SA) as part of the signal transduction pathways that activate systemic acquired resistance in systemic tissue. MeSA is believed to be an inactive form that needs to be demethylated to exert a biological effect. Also able to catalyze the conversion of acibenzolar-S-methyl into acibenzolar to induce systemic acquired resistance. The polypeptide is Salicylic acid-binding protein 2 (Nicotiana tabacum (Common tobacco)).